Consider the following 180-residue polypeptide: Oligoribonuclease (180 aa).

Positions 7–168 (LVWIDLEMTG…QDIRDSIDEL (162 aa)) constitute an Exonuclease domain. The active site involves tyrosine 128.

The protein belongs to the oligoribonuclease family.

Its subcellular location is the cytoplasm. 3'-to-5' exoribonuclease specific for small oligoribonucleotides. This Dichelobacter nodosus (strain VCS1703A) protein is Oligoribonuclease.